Consider the following 131-residue polypeptide: Keratin, high-sulfur matrix protein, IIIA3 (131 aa).

Wool.

Its function is as follows. The keratin products of mammalian epidermal derivatives such as wool and hair consist of microfibrils embedded in a rigid matrix of other proteins. The matrix proteins include the high-sulfur and high-tyrosine keratins, having molecular weights of 6-20 kDa, whereas the microfibrils contain the larger, low-sulfur keratins (40-56 kDa). This Ovis aries (Sheep) protein is Keratin, high-sulfur matrix protein, IIIA3.